Consider the following 287-residue polypeptide: Protease HtpX (287 aa).

Helical transmembrane passes span 4 to 24 (IFLL…VMSI) and 33 to 53 (GGLL…SLAI). His-139 lines the Zn(2+) pocket. Glu-140 is an active-site residue. Residue His-143 coordinates Zn(2+). Transmembrane regions (helical) follow at residues 154 to 174 (LIQG…AGII) and 195 to 215 (AVVF…VAYF). Position 220 (Glu-220) interacts with Zn(2+).

This sequence belongs to the peptidase M48B family. It depends on Zn(2+) as a cofactor.

The protein resides in the cell inner membrane. The protein is Protease HtpX of Shewanella sp. (strain MR-4).